We begin with the raw amino-acid sequence, 113 residues long: Small ribosomal subunit protein bS18 (113 aa).

The tract at residues 1-41 is disordered; the sequence is MSEEKIVNTEAAPEAVAERPARAERSERPERPAKGPFGKKR. Over residues 16-33 the composition is skewed to basic and acidic residues; the sequence is VAERPARAERSERPERPA.

Belongs to the bacterial ribosomal protein bS18 family. As to quaternary structure, part of the 30S ribosomal subunit. Forms a tight heterodimer with protein bS6.

Its function is as follows. Binds as a heterodimer with protein bS6 to the central domain of the 16S rRNA, where it helps stabilize the platform of the 30S subunit. This chain is Small ribosomal subunit protein bS18, found in Elusimicrobium minutum (strain Pei191).